We begin with the raw amino-acid sequence, 310 residues long: Probable RuBisCO transcriptional regulator (310 aa).

One can recognise an HTH lysR-type domain in the interval 6 to 63; the sequence is FTLDQLRILKAIASEGSFKKAAESLYISQPAVSLQIQNLEKQLNIPIFDRANRKAVFT. A DNA-binding region (H-T-H motif) is located at residues 23 to 42; the sequence is FKKAAESLYISQPAVSLQIQ.

This sequence belongs to the LysR transcriptional regulatory family.

Its subcellular location is the plastid. It localises to the chloroplast. Trans-acting transcriptional regulator of RuBisCO genes (rbcL and rbcS) expression. The sequence is that of Probable RuBisCO transcriptional regulator (rbcR) from Guillardia theta (Cryptophyte).